A 202-amino-acid chain; its full sequence is Urease accessory protein UreE (202 aa).

Positions 138-202 are disordered; the sequence is RGAYHSHGGH…HGHHHGHKHD (65 aa). Residues 147-193 show a composition bias toward basic and acidic residues; sequence HSHDHGHAAHDHGHAAHDHGHNHDHDHGHAHGHDHQHDHNCDHDHDH.

It belongs to the UreE family.

The protein localises to the cytoplasm. Its function is as follows. Involved in urease metallocenter assembly. Binds nickel. Probably functions as a nickel donor during metallocenter assembly. The chain is Urease accessory protein UreE from Rhizobium etli (strain CIAT 652).